The chain runs to 298 residues: Pyruvate synthase subunit PorB (298 aa).

The [4Fe-4S] cluster site is built by Cys19, Cys22, Cys47, and Cys218.

As to quaternary structure, heterotetramer of one alpha, one beta, one delta and one gamma chain. [4Fe-4S] cluster is required as a cofactor.

The enzyme catalyses 2 oxidized [2Fe-2S]-[ferredoxin] + pyruvate + CoA = 2 reduced [2Fe-2S]-[ferredoxin] + acetyl-CoA + CO2 + H(+). This is Pyruvate synthase subunit PorB (porB) from Methanocaldococcus jannaschii (strain ATCC 43067 / DSM 2661 / JAL-1 / JCM 10045 / NBRC 100440) (Methanococcus jannaschii).